Reading from the N-terminus, the 117-residue chain is Immunoglobulin heavy variable 7-4-1 (117 aa).

The N-terminal stretch at 1-19 is a signal peptide; that stretch reads MDWTWRILFLVAAATGAHS. The interval 20-44 is framework-1; sequence QVQLVQSGSELKKPGASVKVSCKAS. The 98-residue stretch at 20-117 folds into the Ig-like domain; it reads QVQLVQSGSE…EDTAVYYCAR (98 aa). An intrachain disulfide couples Cys-41 to Cys-115. The segment at 45-52 is complementarity-determining-1; it reads GYTFTSYA. Residues 53–69 form a framework-2 region; the sequence is MNWVRQAPGQGLEWMGW. The complementarity-determining-2 stretch occupies residues 70 to 77; it reads INTNTGNP. A framework-3 region spans residues 78-115; sequence TYAQGFTGRFVFSLDTSVSTAYLQICSLKAEDTAVYYC. The tract at residues 116–117 is complementarity-determining-3; the sequence is AR.

In terms of assembly, immunoglobulins are composed of two identical heavy chains and two identical light chains; disulfide-linked.

It localises to the secreted. Its subcellular location is the cell membrane. Its function is as follows. V region of the variable domain of immunoglobulin heavy chains that participates in the antigen recognition. Immunoglobulins, also known as antibodies, are membrane-bound or secreted glycoproteins produced by B lymphocytes. In the recognition phase of humoral immunity, the membrane-bound immunoglobulins serve as receptors which, upon binding of a specific antigen, trigger the clonal expansion and differentiation of B lymphocytes into immunoglobulins-secreting plasma cells. Secreted immunoglobulins mediate the effector phase of humoral immunity, which results in the elimination of bound antigens. The antigen binding site is formed by the variable domain of one heavy chain, together with that of its associated light chain. Thus, each immunoglobulin has two antigen binding sites with remarkable affinity for a particular antigen. The variable domains are assembled by a process called V-(D)-J rearrangement and can then be subjected to somatic hypermutations which, after exposure to antigen and selection, allow affinity maturation for a particular antigen. The protein is Immunoglobulin heavy variable 7-4-1 of Homo sapiens (Human).